We begin with the raw amino-acid sequence, 150 residues long: UPF0506 protein SJCHGC03047 (150 aa).

The first 18 residues, 1-18, serve as a signal peptide directing secretion; that stretch reads MNTCIQLLILCLVTLTNS. Asparagine 20, asparagine 48, and asparagine 110 each carry an N-linked (GlcNAc...) asparagine glycan. Intrachain disulfides connect cysteine 116-cysteine 130, cysteine 123-cysteine 134, and cysteine 129-cysteine 139.

This sequence belongs to the UPF0506 family.

The protein localises to the secreted. The protein is UPF0506 protein SJCHGC03047 of Schistosoma japonicum (Blood fluke).